The primary structure comprises 189 residues: Transcription factor FapR (189 aa).

It belongs to the FapR family.

In terms of biological role, transcriptional factor involved in regulation of membrane lipid biosynthesis by repressing genes involved in fatty acid and phospholipid metabolism. The chain is Transcription factor FapR from Listeria monocytogenes serotype 4b (strain CLIP80459).